The chain runs to 280 residues: Pantothenate synthetase (280 aa).

30–37 contacts ATP; that stretch reads MGYLHEGH. The active-site Proton donor is the H37. (R)-pantoate is bound at residue Q61. Q61 contributes to the beta-alanine binding site. Residue 147–150 participates in ATP binding; the sequence is GQKD. Q153 is a (R)-pantoate binding site. ATP-binding positions include V176 and 184–187; that span reads MSSR.

This sequence belongs to the pantothenate synthetase family. As to quaternary structure, homodimer.

The protein resides in the cytoplasm. It carries out the reaction (R)-pantoate + beta-alanine + ATP = (R)-pantothenate + AMP + diphosphate + H(+). It participates in cofactor biosynthesis; (R)-pantothenate biosynthesis; (R)-pantothenate from (R)-pantoate and beta-alanine: step 1/1. In terms of biological role, catalyzes the condensation of pantoate with beta-alanine in an ATP-dependent reaction via a pantoyl-adenylate intermediate. The chain is Pantothenate synthetase from Thermotoga petrophila (strain ATCC BAA-488 / DSM 13995 / JCM 10881 / RKU-1).